The following is a 161-amino-acid chain: Lipoprotein signal peptidase (161 aa).

The next 3 helical transmembrane spans lie at 4–24 (LLVVYFLISALLVGLDQWSKY), 61–81 (KMIFFYVITVIVSVVIIYLLI), and 87–107 (SIWYSVGLSFVLAGAIGNFID). Active-site residues include aspartate 116 and aspartate 132. A helical transmembrane segment spans residues 127 to 147 (IFNVADSTLVVGVICIFIYLI).

Belongs to the peptidase A8 family.

It is found in the cell membrane. It carries out the reaction Release of signal peptides from bacterial membrane prolipoproteins. Hydrolyzes -Xaa-Yaa-Zaa-|-(S,diacylglyceryl)Cys-, in which Xaa is hydrophobic (preferably Leu), and Yaa (Ala or Ser) and Zaa (Gly or Ala) have small, neutral side chains.. It functions in the pathway protein modification; lipoprotein biosynthesis (signal peptide cleavage). Functionally, this protein specifically catalyzes the removal of signal peptides from prolipoproteins. In Enterococcus faecalis (strain ATCC 700802 / V583), this protein is Lipoprotein signal peptidase.